The following is a 765-amino-acid chain: LPS-assembly protein LptD (765 aa).

Positions 1-18 (MQIRYFLALSLLPQLVLA) are cleaved as a signal peptide.

This sequence belongs to the LptD family. In terms of assembly, component of the lipopolysaccharide transport and assembly complex. Interacts with LptE and LptA.

Its subcellular location is the cell outer membrane. In terms of biological role, together with LptE, is involved in the assembly of lipopolysaccharide (LPS) at the surface of the outer membrane. This Shewanella sp. (strain MR-4) protein is LPS-assembly protein LptD.